Reading from the N-terminus, the 172-residue chain is Early nodulin-like protein 17 (172 aa).

The signal sequence occupies residues 1–26; it reads MARFTVLITAVVLAFLMAAPMPGVTA. The region spanning 27–127 is the Phytocyanin domain; it reads KKYTVGENKF…GMKLSVKVEK (101 aa). 4 N-linked (GlcNAc...) asparagine glycosylation sites follow: Asn-42, Asn-73, Asn-88, and Asn-101. A disulfide bridge links Cys-80 with Cys-115. Gly-141 carries GPI-anchor amidated glycine lipidation. The propeptide at 142–172 is removed in mature form; sequence SVSMVTGLAQFMIPVSLFAFPAMWDVISRMW.

It belongs to the early nodulin-like (ENODL) family.

It is found in the cell membrane. In terms of biological role, may act as a carbohydrate transporter. The chain is Early nodulin-like protein 17 from Arabidopsis thaliana (Mouse-ear cress).